Here is a 740-residue protein sequence, read N- to C-terminus: E3 ubiquitin-protein ligase DTX3L (740 aa).

The residue at position 2 (Ala-2) is an N-acetylalanine. Ser-9 bears the Phosphoserine mark. Disordered stretches follow at residues 96-119 (NTRPQISSLTQSQAETPSGDMHQH), 195-231 (SEQKQQFSPSMTERKPLSQQERDSCISPSEPETKAEQ), and 524-551 (HETPMDIDSDDSKAASPPLKGSVSSEAS). Polar residues-rich tracts occupy residues 98 to 111 (RPQISSLTQSQAET) and 195 to 205 (SEQKQQFSPSM). Ser-202 bears the Phosphoserine mark. Residues 206–218 (TERKPLSQQERDS) are compositionally biased toward basic and acidic residues. 3 positions are modified to phosphoserine: Ser-221, Ser-532, and Ser-539. The RING-type zinc finger occupies 561–600 (CVICMDTISNKKVLPKCKHEFCAPCINKAMSYKPICPTCQ).

Belongs to the Deltex family. Homodimer and heterodimer. Can heterodimerize with DTX1, enhancing its ubiquitin ligase activity in vitro. Interacts (via N-terminus) with ADP ribosyltransferase PARP9/BAL1 (via PARP catalytic domain) forming a stable complex; the interaction is required to activate PARP9 but is dispensable for DTX3L catalytic activity. Forms a complex with STAT1 and PARP9 independently of IFNB1 or IFNG-mediated STAT1 'Tyr-701' phosphorylation. Found in a complex with PARP9, STAT1 and H2BC9. Found in a complex with E3 ligase ITCH and ESCRT-0 components HGS and STAM. Interacts (via C-terminus) with ITCH; the interaction is increased upon CXCL12 stimulation and inhibits ITCH catalytic activity; the interaction is direct. Interacts with HGS and STAM; the interaction brings together HGS and STAM and promotes their recruitment to early endosomes. As to quaternary structure, (Microbial infection) Interacts with encephalomyocarditis virus (EMCV) C3 protease; the interaction results in C3 protease 'Lys-48'-linked ubiquitination. In terms of assembly, (Microbial infection) Interacts with human rhinovirus (HRV) C3 protease; the interaction results in C3 protease 'Lys-48'-linked ubiquitination. Autoubiquitinated.

It localises to the cytoplasm. Its subcellular location is the nucleus. The protein resides in the early endosome membrane. The protein localises to the lysosome membrane. It carries out the reaction S-ubiquitinyl-[E2 ubiquitin-conjugating enzyme]-L-cysteine + [acceptor protein]-L-lysine = [E2 ubiquitin-conjugating enzyme]-L-cysteine + N(6)-ubiquitinyl-[acceptor protein]-L-lysine.. It functions in the pathway protein modification; protein ubiquitination. With respect to regulation, binding to PARP9 enhances DTX3L catalytic activity. E3 ubiquitin-protein ligase which, in association with ADP-ribosyltransferase PARP9, plays a role in DNA damage repair and in interferon-mediated antiviral responses. Monoubiquitinates several histones, including histone H2A, H2B, H3 and H4. In response to DNA damage, mediates monoubiquitination of 'Lys-91' of histone H4 (H4K91ub1). The exact role of H4K91ub1 in DNA damage response is still unclear but it may function as a licensing signal for additional histone H4 post-translational modifications such as H4 'Lys-20' methylation (H4K20me). PARP1-dependent PARP9-DTX3L-mediated ubiquitination promotes the rapid and specific recruitment of 53BP1/TP53BP1, UIMC1/RAP80, and BRCA1 to DNA damage sites. By monoubiquitinating histone H2B H2BC9/H2BJ and thereby promoting chromatin remodeling, positively regulates STAT1-dependent interferon-stimulated gene transcription and thus STAT1-mediated control of viral replication. Independently of its catalytic activity, promotes the sorting of chemokine receptor CXCR4 from early endosome to lysosome following CXCL12 stimulation by reducing E3 ligase ITCH activity and thus ITCH-mediated ubiquitination of endosomal sorting complex required for transport ESCRT-0 components HGS and STAM. In addition, required for the recruitment of HGS and STAM to early endosomes. In association with PARP9, plays a role in antiviral responses by mediating 'Lys-48'-linked ubiquitination of encephalomyocarditis virus (EMCV) and human rhinovirus (HRV) C3 proteases and thus promoting their proteasomal-mediated degradation. This is E3 ubiquitin-protein ligase DTX3L (DTX3L) from Homo sapiens (Human).